The sequence spans 289 residues: MFFEIALIGTTASGKTYIANTLAREFDAVVLSLDSLCVYKEINIASAKPSQDDLASIKYFGVNLLSVNEHFNVELFIREYQKAKEFALARNLPLIIVGGTGFYLKTMIDGLSEKTLESKSSLNNDEIYTLLLNIDPNYKIEKNDTYRLKKWLGIYEQTREIPSEFLKRTQKTGVLKDIEIYELSWDKEILKKRIQTRTKEMLDNGLLDEAKILFSKFDHKLKALNSIGLKECKEYLDGEISFKELENLITIHTTQLAKRQRTFNKKFQSKALEFDKALAILRMKFSIEK.

Residue 9-16 participates in ATP binding; it reads GTTASGKT. Residue 11–16 coordinates substrate; sequence TASGKT. Residues 34–37 are interaction with substrate tRNA; sequence DSLC.

Belongs to the IPP transferase family. Monomer. The cofactor is Mg(2+).

The catalysed reaction is adenosine(37) in tRNA + dimethylallyl diphosphate = N(6)-dimethylallyladenosine(37) in tRNA + diphosphate. Functionally, catalyzes the transfer of a dimethylallyl group onto the adenine at position 37 in tRNAs that read codons beginning with uridine, leading to the formation of N6-(dimethylallyl)adenosine (i(6)A). In Campylobacter jejuni subsp. jejuni serotype O:23/36 (strain 81-176), this protein is tRNA dimethylallyltransferase.